The primary structure comprises 235 residues: MNFKEGEVLYFDKPLKWTSFAVVNKIRYHICRKLGVKKIKVGHAGTLDPLATGVMIICTGKATKRIEEFQYHTKEYIATLQLGATTPSFDLEKEIDATYPTEHITRELVEEALQRFIGRIEQIPPVFSACKVDGKRAYDLARKGEDVELKAKTLIIDEIELLECNLPEIKIRVVCSKGTYIRALARDIGEALNSGAHLTGLIRTRVGDVRLEDCLSVESFPEWLDQQEIEEVINE.

D48 (nucleophile) is an active-site residue.

This sequence belongs to the pseudouridine synthase TruB family. Type 1 subfamily.

It carries out the reaction uridine(55) in tRNA = pseudouridine(55) in tRNA. Its function is as follows. Responsible for synthesis of pseudouridine from uracil-55 in the psi GC loop of transfer RNAs. The sequence is that of tRNA pseudouridine synthase B from Phocaeicola vulgatus (strain ATCC 8482 / DSM 1447 / JCM 5826 / CCUG 4940 / NBRC 14291 / NCTC 11154) (Bacteroides vulgatus).